The following is a 619-amino-acid chain: Very-long-chain aldehyde decarbonylase GL1-4 (619 aa).

Helical transmembrane passes span 45-65 (IAFSLILPSLLLRMIHNQIWI), 94-114 (GWDDQILFNGLVFYAGYLAMP), 126-146 (GAVVTALVHTGPVEFLYYWFH), 178-198 (FAEHVVYFILFAIPILSTIYL), and 325-345 (AWYMWTLWPLAWLSMVLAWIY). In terms of domain architecture, Fatty acid hydroxylase spans 138 to 272 (VEFLYYWFHR…MPFYDYIYNT (135 aa)).

This sequence belongs to the sterol desaturase family. Homodimer. Expressed ubiquitously at low levels, with higher accumulation in developing panicles, shoots and flag leaves.

The protein resides in the endoplasmic reticulum membrane. It carries out the reaction a long-chain fatty aldehyde + 2 NADPH + O2 + H(+) = a long-chain alkane + formate + 2 NADP(+) + H2O. Its function is as follows. Aldehyde decarbonylase involved in the conversion of aldehydes to alkanes. Core component of a very-long-chain alkane synthesis complex. The sequence is that of Very-long-chain aldehyde decarbonylase GL1-4 from Oryza sativa subsp. japonica (Rice).